Consider the following 235-residue polypeptide: Acyl-protein thioesterase 1 (235 aa).

Residues S125, D181, and H213 each act as charge relay system in the active site.

The protein belongs to the AB hydrolase superfamily. AB hydrolase 2 family.

Its subcellular location is the cytoplasm. The protein localises to the nucleus. It carries out the reaction S-hexadecanoyl-L-cysteinyl-[protein] + H2O = L-cysteinyl-[protein] + hexadecanoate + H(+). Its function is as follows. Hydrolyzes fatty acids from S-acylated cysteine residues in proteins with a strong preference for palmitoylated G-alpha proteins over other acyl substrates. Mediates the deacylation of G-alpha proteins such as GPA1 in vivo, but has weak or no activity toward palmitoylated Ras proteins. Has weak lysophospholipase activity in vitro; however such activity may not exist in vivo. This chain is Acyl-protein thioesterase 1, found in Gibberella zeae (strain ATCC MYA-4620 / CBS 123657 / FGSC 9075 / NRRL 31084 / PH-1) (Wheat head blight fungus).